Reading from the N-terminus, the 555-residue chain is Steroid-22-oyl-CoA synthetase (555 aa).

The protein belongs to the ATP-dependent AMP-binding enzyme family.

It carries out the reaction 3-oxochol-4-en-22-oate + ATP + CoA = 3-oxochol-4-en-22-oyl-CoA + AMP + diphosphate. It catalyses the reaction 3-hydroxy-9-oxo-9,10-seco-chola-1,3,5-trien-22-oate + ATP + CoA = 3-hydroxy-9-oxo-9,10-seco-chola-1,3,5-trien-22-oyl-CoA + AMP + diphosphate. It participates in steroid metabolism. Functionally, involved in cholate catabolism. Catalyzes the ATP-dependent formation of CoA thioesters of steroids with isopropanoyl side chains, likely occurring as degradation intermediates. Can use 4-BNC, HSBNC and HIDP as substrate. This Rhodococcus jostii (strain RHA1) protein is Steroid-22-oyl-CoA synthetase.